We begin with the raw amino-acid sequence, 587 residues long: Aspartate--tRNA ligase (587 aa).

Position 174 (glutamate 174) interacts with L-aspartate. The interval 198-201 (QITK) is aspartate. Arginine 220 serves as a coordination point for L-aspartate. ATP contacts are provided by residues 220 to 222 (RDE) and glutamine 229. Residue histidine 443 coordinates L-aspartate. Glutamate 477 is an ATP binding site. Arginine 484 contributes to the L-aspartate binding site. Position 529 to 532 (529 to 532 (GLDR)) interacts with ATP.

This sequence belongs to the class-II aminoacyl-tRNA synthetase family. Type 1 subfamily. Homodimer.

The protein localises to the cytoplasm. It catalyses the reaction tRNA(Asp) + L-aspartate + ATP = L-aspartyl-tRNA(Asp) + AMP + diphosphate. Functionally, catalyzes the attachment of L-aspartate to tRNA(Asp) in a two-step reaction: L-aspartate is first activated by ATP to form Asp-AMP and then transferred to the acceptor end of tRNA(Asp). The protein is Aspartate--tRNA ligase of Streptococcus pneumoniae (strain Taiwan19F-14).